The sequence spans 115 residues: Tyrosine-protein phosphatase 23 (115 aa).

The Tyrosine-protein phosphatase domain maps to 1 to 115; sequence WMMIVEQKCR…EIGGDAPMVV (115 aa). Asp83 lines the substrate pocket.

Belongs to the protein-tyrosine phosphatase family.

The catalysed reaction is O-phospho-L-tyrosyl-[protein] + H2O = L-tyrosyl-[protein] + phosphate. The sequence is that of Tyrosine-protein phosphatase 23 (STY-23) from Styela plicata (Wrinkled sea squirt).